A 128-amino-acid polypeptide reads, in one-letter code: Con-Ins F2b (128 aa).

A signal peptide spans Met1 to Gly24. Intrachain disulfides connect Cys29-Cys104, Cys41-Cys107, Cys53-Cys120, and Cys106-Cys111. Positions Leu59 to Arg89 are cleaved as a propeptide — c peptide. The residue at position 115 (Glu115) is a 4-carboxyglutamate; partial. Ser127 is modified (serine amide).

The protein belongs to the insulin family. As to quaternary structure, heterodimer of A and B chains; disulfide-linked. In terms of tissue distribution, expressed by the venom gland.

The protein localises to the secreted. In terms of biological role, this venom insulin facilitates prey capture by rapidly inducing hypoglycemic shock. Intraperitoneal injection of this peptide into zebrafish lowers blood glucose with the same potency than human insulin. In vivo, when applied to water, this peptide reduces overall locomotor activity of zebrafish larvae, observed as a significant decrease in the percentage of time spent swimming and movement frequency. This is Con-Ins F2b from Conus floridulus (Cone snail).